We begin with the raw amino-acid sequence, 350 residues long: GTPase Obg (350 aa).

In terms of domain architecture, Obg spans 1-159; it reads MKFIDEAKIT…WELALELKVL (159 aa). The disordered stretch occupies residues 17–43; sequence GDGSASFRREKYIPKGGPDGGDGGRGG. Gly residues predominate over residues 33–43; sequence GPDGGDGGRGG. The 175-residue stretch at 160 to 334 folds into the OBG-type G domain; that stretch reads ADVGLLGMPN…LTYAVMDYLG (175 aa). Residues 166–173, 191–195, 213–216, 284–287, and 315–317 each bind GTP; these read GMPNAGKS, FTTLA, DIPG, NKLD, and SAL. Mg(2+) contacts are provided by S173 and T193.

Belongs to the TRAFAC class OBG-HflX-like GTPase superfamily. OBG GTPase family. As to quaternary structure, monomer. It depends on Mg(2+) as a cofactor.

The protein localises to the cytoplasm. In terms of biological role, an essential GTPase which binds GTP, GDP and possibly (p)ppGpp with moderate affinity, with high nucleotide exchange rates and a fairly low GTP hydrolysis rate. Plays a role in control of the cell cycle, stress response, ribosome biogenesis and in those bacteria that undergo differentiation, in morphogenesis control. The protein is GTPase Obg of Thiobacillus denitrificans (strain ATCC 25259 / T1).